A 484-amino-acid polypeptide reads, in one-letter code: Nuclear rim protein 1 (484 aa).

Phosphoserine is present on Ser3. 2 helical membrane-spanning segments follow: residues 145 to 165 (FTIF…MFGY) and 252 to 272 (TAIV…AIVF). A disordered region spans residues 416 to 457 (SSNENLEKGGAYLPNQDQNRPSKSLSPLRKTPLSARQKRFEG). At Ser417 the chain carries Phosphoserine. Positions 430 to 440 (NQDQNRPSKSL) are enriched in polar residues. Ser474 carries the post-translational modification Phosphoserine.

It belongs to the NUR1 family. Interacts with CSM1.

The protein resides in the nucleus membrane. Functionally, member of a perinuclear network that controls recombination at multiple loci to maintain genome stability. Required for rDNA repeat stability. This chain is Nuclear rim protein 1 (NUR1), found in Saccharomyces cerevisiae (strain ATCC 204508 / S288c) (Baker's yeast).